The sequence spans 195 residues: dITP/XTP pyrophosphatase (195 aa).

Residue S7 to K12 participates in substrate binding. Mg(2+)-binding residues include E38 and D68. The active-site Proton acceptor is D68. Residues S69, F150–D153, K173, and H178–R179 each bind substrate.

Belongs to the HAM1 NTPase family. In terms of assembly, homodimer. The cofactor is Mg(2+).

The enzyme catalyses XTP + H2O = XMP + diphosphate + H(+). It carries out the reaction dITP + H2O = dIMP + diphosphate + H(+). It catalyses the reaction ITP + H2O = IMP + diphosphate + H(+). Its function is as follows. Pyrophosphatase that catalyzes the hydrolysis of nucleoside triphosphates to their monophosphate derivatives, with a high preference for the non-canonical purine nucleotides XTP (xanthosine triphosphate), dITP (deoxyinosine triphosphate) and ITP. Seems to function as a house-cleaning enzyme that removes non-canonical purine nucleotides from the nucleotide pool, thus preventing their incorporation into DNA/RNA and avoiding chromosomal lesions. This chain is dITP/XTP pyrophosphatase, found in Nautilia profundicola (strain ATCC BAA-1463 / DSM 18972 / AmH).